The chain runs to 93 residues: UPF0728 protein C10orf53 homolog (93 aa).

Belongs to the UPF0728 family.

In Xenopus tropicalis (Western clawed frog), this protein is UPF0728 protein C10orf53 homolog.